Consider the following 273-residue polypeptide: MGLHESQDSTIYELIEFILDDLIQFINVTELGKEIFPIATFFDKNDIIRTLMEEKIDFYSRSVDNKVIVNFDEDIFRYLINLEEFDINAEDKNGNTLLHAAIDQGKSEVVKFLTSYKNLEVNTKDLGGNSPLHLAIKSNNPEIVEMLLSYENINVNEKDKYGDTTLHKAIRSYNHKIIEMLLLREEIDVNEKDNQGETPLHGAVKSNRPEIVKMLLSHKNMDTKQKEIFSFLEISREDEAKTPINDGVSILGASEAESYGESLHNKDASSYSL.

ANK repeat units follow at residues 31-60 (LGKE…DFYS), 93-123 (NGNT…EVNT), 127-157 (GGNS…NVNE), 161-191 (YGDT…DVNE), and 195-225 (QGET…DTKQ).

The polypeptide is Putative ankyrin repeat protein RBE_0317 (Rickettsia bellii (strain RML369-C)).